The primary structure comprises 151 residues: Ribosome maturation factor RimP (151 aa).

Belongs to the RimP family.

The protein resides in the cytoplasm. Its function is as follows. Required for maturation of 30S ribosomal subunits. This is Ribosome maturation factor RimP from Pasteurella multocida (strain Pm70).